A 586-amino-acid polypeptide reads, in one-letter code: Arginine--tRNA ligase (586 aa).

The short motif at 130–140 is the 'HIGH' region element; that stretch reads ANPTGPMHVGH.

It belongs to the class-I aminoacyl-tRNA synthetase family. As to quaternary structure, monomer.

The protein resides in the cytoplasm. The catalysed reaction is tRNA(Arg) + L-arginine + ATP = L-arginyl-tRNA(Arg) + AMP + diphosphate. The protein is Arginine--tRNA ligase of Methylobacterium sp. (strain 4-46).